Reading from the N-terminus, the 167-residue chain is Photosystem I assembly protein Ycf3 (167 aa).

3 TPR repeats span residues 35-68 (AFSYYRDGMSAQSEGEYAEALANYYEALNLEEDP), 72-105 (SFILYNIGLIHASNGEYVKALDYYHKALEANNKL), and 120-153 (AVKASEINDLETAQALFHEAAQYWKQAIKLAPSN).

It belongs to the Ycf3 family.

Its subcellular location is the plastid. It is found in the chloroplast thylakoid membrane. Functionally, essential for the assembly of the photosystem I (PSI) complex. May act as a chaperone-like factor to guide the assembly of the PSI subunits. The polypeptide is Photosystem I assembly protein Ycf3 (Galdieria sulphuraria (Red alga)).